A 463-amino-acid polypeptide reads, in one-letter code: Retinoic acid receptor RXR-gamma (463 aa).

The modulating stretch occupies residues 1–138; it reads MYGNYSHFMK…TSPGSLVKHI (138 aa). The interval 18 to 53 is disordered; sequence SPGHTGSTSMSPSAALSTGKPMDSHPSYTDTPVSAP. Over residues 21 to 33 the composition is skewed to polar residues; it reads HTGSTSMSPSAAL. 2 NR C4-type zinc fingers span residues 139-159 and 175-194; these read CAIC…CEGC and CRDN…CQYC. A DNA-binding region (nuclear receptor) is located at residues 139–204; the sequence is CAICGDRSSG…RYQKCLVMGM (66 aa). Residues 205 to 230 are hinge; it reads KREAVQEERQRSRERAESEAECASSG. Positions 211 to 222 are enriched in basic and acidic residues; that stretch reads EERQRSRERAES. A disordered region spans residues 211 to 232; the sequence is EERQRSRERAESEAECASSGHE. Residues 231-459 enclose the NR LBD domain; sequence HEDMPVERIL…TFLMEMLETP (229 aa).

This sequence belongs to the nuclear hormone receptor family. NR2 subfamily. In terms of assembly, homodimer. Heterodimer with a RAR molecule. Binds DNA preferentially as a RAR/RXR heterodimer. Interacts with RARA. Acetylated by EP300.

It is found in the nucleus. The protein resides in the cytoplasm. Its function is as follows. Receptor for retinoic acid. Retinoic acid receptors bind as heterodimers to their target response elements in response to their ligands, all-trans or 9-cis retinoic acid, and regulate gene expression in various biological processes. The RAR/RXR heterodimers bind to the retinoic acid response elements (RARE) composed of tandem 5'-AGGTCA-3' sites known as DR1-DR5. The high affinity ligand for RXRs is 9-cis retinoic acid. This chain is Retinoic acid receptor RXR-gamma (RXRG), found in Pongo abelii (Sumatran orangutan).